The sequence spans 1285 residues: MQEAARRASLRKEHTPTNEKFGDLSKQDSLGERASSKLTLDDELYDILYAFGETDAFINKGDKQRETDEDGNPLTRQALLERIRQKKEVIGKLRCQAWSMTRKRRTLKLAQKYLEQHESKVSRSHLYMEEMRKRARLMKRSFSNFKTYLIPWESKIKRIESHFGSVVSSYFTFLRWIVFVNIMITLIALVFVVLPETLADSVANEGRFNRTKTRKQIPANERVHADELAVVWHYDGYLRYSPLFYGYYSDDPFLGNKIKYALPLAYFMVTLTIFAYSFFAILRKMAANARMSKLSGSKAEQYIFNWKLFTGWDYTIGNSETASNTVMAVVIKLRESIADIKKDAHGKFRLLQFSLRVFANIIICAMLGFSIYCIIFAVQKSQVQDDGNLFTKNQVPSVVSTITHVFPMIFDLIGKMENYHPRTALRAHLGRVLILYTVNYITLIFALFEKMTALRDRVNSTSTSSSHRTKRQQGGWNPNMQRPPPYASRAEVRQMSDFLAANTRRFQTVSQRTTRSVTTPFTVAPQFGPFNVNNPNAVFHNGTHSTSFESQILGPKALPIFTPPPRKYPGFTPGNVGQQFGGPDFPRNQVYTKSTPLPRVRTKPPWVYTTTHPPLVQNRAMTTTMSKSAKKGNSKNLDDDILLSNETIQMSEAALRRNHDGHNNDICWETIIGQEIVKLVTMDLIFTILSILVIDLFRGLWIKYCSSWWCWDIETTFPEYGEFKVAENVLHIINNQGMIWLGLFFAPLLPAINNIKLIILMYIRGWAVMTCNVPAREIFRASRSSNFYLGILLIWLLLCTLPVGFVIASMSPSRSCGPFARYQHFYTVVTREIEKRVDQTVLSYIRHIASPGVVIPIILFLILIIYFLFSLVRGLREANTDLQAQLVHERTEEKKKIFELAGGKKNKFEKDRDKKRSNDYIPLIEQRRREPWRQYHEMEADHALASDSSEESDINEDEDDERQPLTAYPLRAIETPPETLQVTAFHPSLGSLIENREMEDEESASGDQLPMIHKSVSFQGPSHMQMRQSISTESCSQISRSAIQVATPEEIRALLRPYLEAKYGIPYQHGIKSFPIDVHTPPNNTPSRRSSKYNSFVSLYEHTRDDHKNFVASTIKETDEDPGKSDKKQTSSKDVAPDFMPWPSADEARALREKMKSKTPLMLTKTTVEEKPKGGKSSESEFRPPVPIHRKYNIQTTEEENEEEETDSAPESSKKRFRISVSPTKTIAPASASRAQHKIVSQASSSSSIPHGRQPDPNKKASLVLPPLRAPRVQFDEDDSPRQID.

Positions 1–29 are disordered; sequence MQEAARRASLRKEHTPTNEKFGDLSKQDS. The Cytoplasmic portion of the chain corresponds to 1-164; the sequence is MQEAARRASL…KIKRIESHFG (164 aa). Residues 165–202 form a helical membrane-spanning segment; that stretch reads SVVSSYFTFLRWIVFVNIMITLIALVFVVLPETLADSV. The Extracellular portion of the chain corresponds to 203–260; sequence ANEGRFNRTKTRKQIPANERVHADELAVVWHYDGYLRYSPLFYGYYSDDPFLGNKIKY. Asparagine 209 carries an N-linked (GalNAc...) asparagine glycan. A helical transmembrane segment spans residues 261–292; it reads ALPLAYFMVTLTIFAYSFFAILRKMAANARMS. Residues 293–349 are Cytoplasmic-facing; the sequence is KLSGSKAEQYIFNWKLFTGWDYTIGNSETASNTVMAVVIKLRESIADIKKDAHGKFR. A helical transmembrane segment spans residues 350-381; that stretch reads LLQFSLRVFANIIICAMLGFSIYCIIFAVQKS. At 382-388 the chain is on the extracellular side; it reads QVQDDGN. The helical transmembrane segment at 389-416 threads the bilayer; sequence LFTKNQVPSVVSTITHVFPMIFDLIGKM. Topologically, residues 417–420 are cytoplasmic; it reads ENYH. The chain crosses the membrane as a helical span at residues 421 to 455; the sequence is PRTALRAHLGRVLILYTVNYITLIFALFEKMTALR. Residues 456–667 are Extracellular-facing; that stretch reads DRVNSTSTSS…NHDGHNNDIC (212 aa). The tract at residues 458–488 is disordered; sequence VNSTSTSSSHRTKRQQGGWNPNMQRPPPYAS. Residues cysteine 667 and cysteine 816 are joined by a disulfide bond. A helical transmembrane segment spans residues 668–705; that stretch reads WETIIGQEIVKLVTMDLIFTILSILVIDLFRGLWIKYC. The segment at 696–720 is required for interaction with tmie; sequence LFRGLWIKYCSSWWCWDIETTFPEY. The Cytoplasmic segment spans residues 706–724; that stretch reads SSWWCWDIETTFPEYGEFK. The helical transmembrane segment at 725–745 threads the bilayer; it reads VAENVLHIINNQGMIWLGLFF. Residues 746-748 lie on the Extracellular side of the membrane; the sequence is APL. The chain crosses the membrane as a helical span at residues 749-771; that stretch reads LPAINNIKLIILMYIRGWAVMTC. The interval 766 to 773 is required for interaction with tmie; that stretch reads WAVMTCNV. Residues 772-785 are Cytoplasmic-facing; that stretch reads NVPAREIFRASRSS. A helical membrane pass occupies residues 786–809; that stretch reads NFYLGILLIWLLLCTLPVGFVIAS. Residues 810-852 are Extracellular-facing; sequence MSPSRSCGPFARYQHFYTVVTREIEKRVDQTVLSYIRHIASPG. The helical transmembrane segment at 853-886 threads the bilayer; the sequence is VVIPIILFLILIIYFLFSLVRGLREANTDLQAQL. The Cytoplasmic segment spans residues 887–1285; that stretch reads VHERTEEKKK…DEDDSPRQID (399 aa). Disordered regions lie at residues 940-962 and 1114-1285; these read ADHALASDSSEESDINEDEDDER and TIKE…RQID. Acidic residues predominate over residues 948–961; it reads SSEESDINEDEDDE. Basic and acidic residues-rich tracts occupy residues 1121–1131, 1146–1156, and 1167–1182; these read DPGKSDKKQTS, DEARALREKMK, and TVEEKPKGGKSSESEF. The segment covering 1197–1208 has biased composition (acidic residues); sequence TEEENEEEETDS.

Belongs to the TMC family. Homodimer. Interacts with calm-1 and tmie to form the MET channel. As to expression, expressed in the ASH polymodal avoidance neurons. Also expressed in other sensory neurons, including the ADF, ASE, ADL, AQR, PQR, URX and PHA cells.

The protein resides in the cell membrane. The enzyme catalyses Na(+)(in) = Na(+)(out). The catalysed reaction is Ca(2+)(in) = Ca(2+)(out). It catalyses the reaction K(+)(in) = K(+)(out). Its function is as follows. Pore-forming subunit of the mechanotransducer (MET) non-selective cation channel complex. The MET complex is composed of symmetric dimeric MET channels, each channel comprising two copies of pore-forming ion-conducting transmembrane TMC subunits and auxiliary proteins including the transmembrane inner ear protein/tmie, the calcium-binding protein/calm-1 and arrestin domain protein arrd-6. Sodium ions are the most permeable, whereas calcium and potassium have lower indices. Sodium-sensor ion channel that acts specifically in salt taste chemosensation. Required for salt-evoked neuronal activity and behavioral avoidance of high concentrations of NaCl. The polypeptide is Transmembrane channel-like protein 1 (tmc-1) (Caenorhabditis elegans).